Here is a 504-residue protein sequence, read N- to C-terminus: MEEFQRYLQLDRSQQHDFLYPLIFQEYIYALAHDHGLNRSILLKNTGSDNKSSLLIVKRLIIRMYQQNHLIIPVNDSNQNQLFGRNKNLYSQMISEGFAVIVEIPFSLRLIASLAGKEIVKSHNLRSIHSIFPFFENNFSHLNYVLDMLIPHPVHLEILVQTLRYWVKDASSLHLLRFFLYEYRNWNSLITPKKPSSSFSKKNQRLFFFLYNAHVCEYESIFVFLCNQSSYLRSTSSEAFLERIYFYGKIECLVEVFAKVFPVNLWLFKDPNMHYVRYQGKSIMASKGTSLLMNKWKYYLINFWQCHFYLWSHPGRIYINQLSNHSFDFMGYFSSVRLNPSMVRSQMLENSFLIDNAIKKFDTIVPIIPLIGSLAKAKFCNVLGYPISKPVRADLSDSDIIDRFGRICRNFSHYHSGSSKKKSLYRIKYILRLSCARTLARKHKSSVRFFLKRLGSELLEEFFMAEEQVLPLTFPRVSSTFQGLYRGRVWYLDIFCINDLANHE.

The protein belongs to the intron maturase 2 family. MatK subfamily.

The protein localises to the plastid. The protein resides in the chloroplast. In terms of biological role, usually encoded in the trnK tRNA gene intron. Probably assists in splicing its own and other chloroplast group II introns. This Aucuba japonica (Japanese laurel) protein is Maturase K.